A 194-amino-acid chain; its full sequence is Peptidyl-tRNA hydrolase (194 aa).

Y16 contributes to the tRNA binding site. The Proton acceptor role is filled by H21. Residues F67, N69, and N115 each coordinate tRNA.

The protein belongs to the PTH family. As to quaternary structure, monomer.

It is found in the cytoplasm. It catalyses the reaction an N-acyl-L-alpha-aminoacyl-tRNA + H2O = an N-acyl-L-amino acid + a tRNA + H(+). Functionally, hydrolyzes ribosome-free peptidyl-tRNAs (with 1 or more amino acids incorporated), which drop off the ribosome during protein synthesis, or as a result of ribosome stalling. Catalyzes the release of premature peptidyl moieties from peptidyl-tRNA molecules trapped in stalled 50S ribosomal subunits, and thus maintains levels of free tRNAs and 50S ribosomes. This Shigella boydii serotype 18 (strain CDC 3083-94 / BS512) protein is Peptidyl-tRNA hydrolase.